A 474-amino-acid polypeptide reads, in one-letter code: Probable cytosol aminopeptidase (474 aa).

Residues K237 and D242 each coordinate Mn(2+). K249 is a catalytic residue. Mn(2+) is bound by residues D260, D319, and E321. Residue R323 is part of the active site.

This sequence belongs to the peptidase M17 family. It depends on Mn(2+) as a cofactor.

The protein localises to the cytoplasm. The catalysed reaction is Release of an N-terminal amino acid, Xaa-|-Yaa-, in which Xaa is preferably Leu, but may be other amino acids including Pro although not Arg or Lys, and Yaa may be Pro. Amino acid amides and methyl esters are also readily hydrolyzed, but rates on arylamides are exceedingly low.. The enzyme catalyses Release of an N-terminal amino acid, preferentially leucine, but not glutamic or aspartic acids.. In terms of biological role, presumably involved in the processing and regular turnover of intracellular proteins. Catalyzes the removal of unsubstituted N-terminal amino acids from various peptides. This Helicobacter hepaticus (strain ATCC 51449 / 3B1) protein is Probable cytosol aminopeptidase.